We begin with the raw amino-acid sequence, 244 residues long: Tyrosine recombinase XerD-like (244 aa).

Residues 1 to 73 form the Core-binding (CB) domain; that stretch reads MRDRISAFLE…ACNQFLYFLY (73 aa). Residues 90-244 form the Tyr recombinase domain; that stretch reads AEKKTEKPEI…KTVLTLEKYR (155 aa). Residues K150 and R211 contribute to the active site. Y243 functions as the O-(3'-phospho-DNA)-tyrosine intermediate in the catalytic mechanism.

It belongs to the 'phage' integrase family. XerD-like subfamily.

The protein resides in the cytoplasm. Functionally, putative tyrosine recombinase. Not involved in the cutting and rejoining of the recombining DNA molecules on dif(SL) site. This is Tyrosine recombinase XerD-like from Streptococcus pneumoniae serotype 2 (strain D39 / NCTC 7466).